Here is a 159-residue protein sequence, read N- to C-terminus: Protein UXT homolog (159 aa).

The protein belongs to the UXT family.

In Nematostella vectensis (Starlet sea anemone), this protein is Protein UXT homolog.